The following is a 174-amino-acid chain: Large ribosomal subunit protein uL10 (174 aa).

It belongs to the universal ribosomal protein uL10 family. Part of the ribosomal stalk of the 50S ribosomal subunit. The N-terminus interacts with L11 and the large rRNA to form the base of the stalk. The C-terminus forms an elongated spine to which L12 dimers bind in a sequential fashion forming a multimeric L10(L12)X complex.

Forms part of the ribosomal stalk, playing a central role in the interaction of the ribosome with GTP-bound translation factors. In Trichlorobacter lovleyi (strain ATCC BAA-1151 / DSM 17278 / SZ) (Geobacter lovleyi), this protein is Large ribosomal subunit protein uL10.